We begin with the raw amino-acid sequence, 242 residues long: Mediator of RNA polymerase II transcription subunit 19-A (242 aa).

Over residues 1–15 (MTEIFSTLFGQNDAQ) the composition is skewed to polar residues. 2 disordered regions span residues 1 to 33 (MTEIFSTLFGQNDAQPPSGPAALGFAPGKPPPS) and 171 to 242 (PPKK…NSLR). Basic residues predominate over residues 171–184 (PPKKKSKHKHRHHH). Over residues 193–210 (TRTDPTKKKKKKDNEPER) the composition is skewed to basic and acidic residues. The segment covering 211–223 (RKKKKDKKKKKNR) has biased composition (basic residues). Residues 232–242 (TGSQPNSNSLR) show a composition bias toward polar residues.

Belongs to the Mediator complex subunit 19 family. As to quaternary structure, component of the Mediator complex.

It is found in the nucleus. Component of the Mediator complex, a coactivator involved in the regulated transcription of nearly all RNA polymerase II-dependent genes. Mediator functions as a bridge to convey information from gene-specific regulatory proteins to the basal RNA polymerase II transcription machinery. Mediator is recruited to promoters by direct interactions with regulatory proteins and serves as a scaffold for the assembly of a functional preinitiation complex with RNA polymerase II and the general transcription factors. This chain is Mediator of RNA polymerase II transcription subunit 19-A (med19a), found in Danio rerio (Zebrafish).